The following is a 1038-amino-acid chain: Ubiquitin carboxyl-terminal hydrolase 36 (1038 aa).

2 disordered regions span residues 22-44 (LGGN…TNGS) and 107-148 (ANGH…PKPK). A compositionally biased stretch (polar residues) spans 23-44 (GGNSSAGSSTDQAKSGEDTNGS). Residues 172–480 (TGMINVGNTC…NAYIMFFELD (309 aa)) enclose the USP domain. Cys181 functions as the Nucleophile in the catalytic mechanism. His439 acts as the Proton acceptor in catalysis. 4 disordered regions span residues 487–794 (PAAN…SKTG), 818–881 (GSPV…SNGS), 912–985 (LLVD…YNQN), and 1000–1038 (RFGG…QQQT). Low complexity-rich tracts occupy residues 502–517 (STTP…PSPT), 546–559 (QQNQ…LQLG), and 587–606 (NGNK…KSIN). A phosphoserine mark is found at Ser513 and Ser515. Over residues 629–641 (TTAQLPSMPNMTE) the composition is skewed to polar residues. Residues Thr658 and Thr662 each carry the phosphothreonine modification. A phosphoserine mark is found at Ser672 and Ser674. Polar residues predominate over residues 703–728 (TNGHSKTNGSHTNGSASSSVHVNNSK). Residues 729-746 (QKTDAIDEIFKSLKKSAD) are compositionally biased toward basic and acidic residues. Ser747 carries the post-translational modification Phosphoserine. Residues 747 to 756 (SDEDDDEEEP) are compositionally biased toward acidic residues. The span at 766–776 (PQKQSQSQSKA) shows a compositional bias: low complexity. The segment covering 777–786 (PPSPKTPPSP) has biased composition (pro residues). Residue Ser779 is modified to Phosphoserine. The residue at position 782 (Thr782) is a Phosphothreonine. Residues Ser785 and Ser819 each carry the phosphoserine modification. Thr825 is modified (phosphothreonine). The span at 832 to 844 (NPFSSSKPSTDSP) shows a compositional bias: polar residues. Phosphoserine is present on Ser843. Thr846 is subject to Phosphothreonine. Positions 859-881 (ALKSHQQPRVGNGYQSNATSNGS) are enriched in polar residues. Residues 912-923 (LLVDAREQRQRD) are compositionally biased toward basic and acidic residues. Residues 942-953 (SGSAKGNNASNS) show a composition bias toward low complexity.

It belongs to the peptidase C19 family. Interacts with atms/PAF1, but not with CycT. Interacts (via C-terminus) with imd (via N-terminus).

The protein resides in the nucleus. It is found in the nucleolus. Its subcellular location is the cytoplasm. The enzyme catalyses Thiol-dependent hydrolysis of ester, thioester, amide, peptide and isopeptide bonds formed by the C-terminal Gly of ubiquitin (a 76-residue protein attached to proteins as an intracellular targeting signal).. In terms of biological role, hydrolase that deubiquitinates polyubiquitinated target proteins including imd. Required for preventing the constitutive activation of the imd/NF-kappa-B (Imd) signaling cascade under unchalleneged conditions. Deubiquitinates imd linked 'Lys-63' chains which leads its proteasomal degradation and consequently down-regulation of the Imd signaling cascade. Removal of the activating 'Lys-63'-linked chains is likely to enable their replacement with 'Lys-48'-linked chains which act as 'tags' the for proteasomal degradation of imd. Required for maintaining multiple types of adult stem cells, including male and female germline, epithelial follicle cell and intestinal stem cells. May function as a transcriptional repressor by continually deubiquiting histone H2B at the promoters of genes critical for cellular differentiation, thereby preventing histone H3 'Lys-4' trimethylation (H3K4me3). Controls selective autophagy activation by ubiquitinated proteins. The chain is Ubiquitin carboxyl-terminal hydrolase 36 (scny) from Drosophila melanogaster (Fruit fly).